Consider the following 621-residue polypeptide: TOX high mobility group box family member 4 (621 aa).

Disordered stretches follow at residues 153-227 (LGLS…QKPV) and 305-333 (LDPA…ASIE). The residue at position 176 (T176) is a Phosphothreonine. S178, S181, and S182 each carry phosphoserine. The span at 183-193 (LHEDGVEDFRR) shows a compositional bias: basic and acidic residues. Positions 208-218 (KQKAPKKRKKK) are enriched in basic residues. The Nuclear localization signal motif lies at 213–218 (KKRKKK). The HMG box DNA-binding region spans 223–291 (PQKPVSAYAL…EYLKALAAYK (69 aa)). Residues 307 to 319 (PAPPSQTPSPPPM) show a composition bias toward pro residues. The residue at position 313 (T313) is a Phosphothreonine. S315 carries the phosphoserine modification. Low complexity predominate over residues 320–333 (ATVDPASPAPASIE). The residue at position 481 (R481) is an Asymmetric dimethylarginine. Residues 510-529 (PTVESSPERPMNNSPEAHTV) form a disordered region. Residues S533, S550, S552, S560, S562, and S567 each carry the phosphoserine modification.

As to quaternary structure, component of the PNUTS-PP1 phosphatase complex, composed of PPP1R10/PNUTS, TOX4, WDR82 and PPP1CA or PPP1CB or PPP1CC. Interacts with PPP1R10/PNUTS. Interacts with FOXO1 and CREB1 (increased by cAMP); FOXO1 and CREB1 are required for full induction of TOX4-dependent activity and the interactions are inhibited by insulin.

Its subcellular location is the nucleus. The protein resides in the chromosome. With respect to regulation, in liver, recruited to target gene promoters following treatment with dexamethasone and cAMP. Binding is decreased in presence of insulin. Its function is as follows. Transcription factor that modulates cell fate reprogramming from the somatic state to the pluripotent and neuronal fate. In liver, controls the expression of hormone-regulated gluconeogenic genes such as G6PC1 and PCK1. This regulation is independent of the insulin receptor activation. Also acts as a regulatory component of protein phosphatase 1 (PP1) complexes. Component of the PNUTS-PP1 protein phosphatase complex, a PP1 complex that regulates RNA polymerase II transcription pause-release. PNUTS-PP1 also plays a role in the control of chromatin structure and cell cycle progression during the transition from mitosis into interphase. The protein is TOX high mobility group box family member 4 (TOX4) of Pongo abelii (Sumatran orangutan).